The primary structure comprises 124 residues: Glycine cleavage system H protein (124 aa).

Positions 22-104 constitute a Lipoyl-binding domain; it reads KAKVGITDFA…YENGYLFIIE (83 aa). Position 63 is an N6-lipoyllysine (Lys-63).

Belongs to the GcvH family. In terms of assembly, the glycine cleavage system is composed of four proteins: P, T, L and H. It depends on (R)-lipoate as a cofactor.

In terms of biological role, the glycine cleavage system catalyzes the degradation of glycine. The H protein shuttles the methylamine group of glycine from the P protein to the T protein. This is Glycine cleavage system H protein from Endomicrobium trichonymphae.